The sequence spans 416 residues: Glutamyl-tRNA reductase (416 aa).

Substrate-binding positions include 49–52 (TCNR), Ser-105, 110–112 (EPQ), and Gln-116. The active-site Nucleophile is Cys-50. 185–190 (GAGETI) serves as a coordination point for NADP(+).

The protein belongs to the glutamyl-tRNA reductase family. Homodimer.

The enzyme catalyses (S)-4-amino-5-oxopentanoate + tRNA(Glu) + NADP(+) = L-glutamyl-tRNA(Glu) + NADPH + H(+). The protein operates within porphyrin-containing compound metabolism; protoporphyrin-IX biosynthesis; 5-aminolevulinate from L-glutamyl-tRNA(Glu): step 1/2. Its function is as follows. Catalyzes the NADPH-dependent reduction of glutamyl-tRNA(Glu) to glutamate 1-semialdehyde (GSA). This is Glutamyl-tRNA reductase from Shewanella halifaxensis (strain HAW-EB4).